The sequence spans 35 residues: RWKVFKKIEKVGRNIRDGVIKAAPAIEVLGQAKAL.

The residue at position 35 (leucine 35) is a Leucine amide.

In terms of assembly, monomer. As to expression, hemolymph.

It is found in the secreted. Its function is as follows. Cecropins have lytic and antibacterial activity against several Gram-positive and Gram-negative bacteria. Also has activity against fungi. This Heliothis virescens (Tobacco budworm moth) protein is Cecropin-A.